Here is a 525-residue protein sequence, read N- to C-terminus: ATP synthase subunit beta, mitochondrial (525 aa).

Residues 1-44 (MLKKQALSGIRRFSLATKQSFVKTSYKLPRKSWLNTAKFNTIRY) constitute a mitochondrion transit peptide. 203–210 (GGAGVGKT) is a binding site for ATP.

This sequence belongs to the ATPase alpha/beta chains family. F-type ATPases have 2 components, CF(1) - the catalytic core - and CF(0) - the membrane proton channel. CF(1) has five subunits: alpha(3), beta(3), gamma(1), delta(1), epsilon(1). CF(0) has three main subunits: a, b and c.

The protein resides in the mitochondrion. It localises to the mitochondrion inner membrane. The enzyme catalyses ATP + H2O + 4 H(+)(in) = ADP + phosphate + 5 H(+)(out). In terms of biological role, mitochondrial membrane ATP synthase (F(1)F(0) ATP synthase or Complex V) produces ATP from ADP in the presence of a proton gradient across the membrane which is generated by electron transport complexes of the respiratory chain. F-type ATPases consist of two structural domains, F(1) - containing the extramembraneous catalytic core, and F(0) - containing the membrane proton channel, linked together by a central stalk and a peripheral stalk. During catalysis, ATP synthesis in the catalytic domain of F(1) is coupled via a rotary mechanism of the central stalk subunits to proton translocation. Subunits alpha and beta form the catalytic core in F(1). Rotation of the central stalk against the surrounding alpha(3)beta(3) subunits leads to hydrolysis of ATP in three separate catalytic sites on the beta subunits. This is ATP synthase subunit beta, mitochondrial (atp2) from Schizosaccharomyces pombe (strain 972 / ATCC 24843) (Fission yeast).